A 152-amino-acid chain; its full sequence is MLMNSVIALTFLTASSNNGGLNIDVQQEEEKRINNDLNQYDTTLFNKDSKEVNDAIAKQKKERQQQIKNDMFQNQASHSTRLNETKKVLFSKSNLEKTSESDKSPYIQNKQEKKIFPYILMSVGAFLTLGFVIFSIHKGRRTKNESARKSNI.

Residues 1 to 114 lie on the Cytoplasmic side of the membrane; sequence MLMNSVIALT…PYIQNKQEKK (114 aa). The helical transmembrane segment at 115–135 threads the bilayer; it reads IFPYILMSVGAFLTLGFVIFS. The Extracellular segment spans residues 136–152; sequence IHKGRRTKNESARKSNI.

Belongs to the EssA family.

Its subcellular location is the cell membrane. Component of the ESAT-6 secretion system (Ess). Required for the secretion of EsxA and EsxB. The sequence is that of ESAT-6 secretion machinery protein EssA from Staphylococcus aureus (strain Mu50 / ATCC 700699).